Reading from the N-terminus, the 151-residue chain is UPF0756 membrane protein Dred_1097 (151 aa).

The next 4 helical transmembrane spans lie at 6–26, 52–72, 75–95, and 111–131; these read IILL…LATA, VGLI…NIVY, LVMK…TLAT, and LIFG…GIPI.

The protein belongs to the UPF0756 family.

The protein resides in the cell membrane. This is UPF0756 membrane protein Dred_1097 from Desulforamulus reducens (strain ATCC BAA-1160 / DSM 100696 / MI-1) (Desulfotomaculum reducens).